The following is an 806-amino-acid chain: Lon protease (806 aa).

Residues 13-206 (LPMMPIRDVV…RVAEMLDIEI (194 aa)) form the Lon N-terminal domain. Residue 356–363 (GPPGVGKT) participates in ATP binding. A Lon proteolytic domain is found at 599–780 (KNEIGAATGL…DEVLKIALER (182 aa)). Residues serine 686 and lysine 729 contribute to the active site.

Belongs to the peptidase S16 family. In terms of assembly, homohexamer. Organized in a ring with a central cavity.

It localises to the cytoplasm. The enzyme catalyses Hydrolysis of proteins in presence of ATP.. In terms of biological role, ATP-dependent serine protease that mediates the selective degradation of mutant and abnormal proteins as well as certain short-lived regulatory proteins. Required for cellular homeostasis and for survival from DNA damage and developmental changes induced by stress. Degrades polypeptides processively to yield small peptide fragments that are 5 to 10 amino acids long. Binds to DNA in a double-stranded, site-specific manner. This is Lon protease from Solibacter usitatus (strain Ellin6076).